The following is a 545-amino-acid chain: Chaperonin GroEL (545 aa).

Residues 29-32, Lys50, 86-90, Gly414, 477-479, and Asp493 each bind ATP; these read TMGP, DGTTT, and DAA.

The protein belongs to the chaperonin (HSP60) family. As to quaternary structure, forms a cylinder of 14 subunits composed of two heptameric rings stacked back-to-back. Interacts with the co-chaperonin GroES.

Its subcellular location is the cytoplasm. It carries out the reaction ATP + H2O + a folded polypeptide = ADP + phosphate + an unfolded polypeptide.. Functionally, together with its co-chaperonin GroES, plays an essential role in assisting protein folding. The GroEL-GroES system forms a nano-cage that allows encapsulation of the non-native substrate proteins and provides a physical environment optimized to promote and accelerate protein folding. The sequence is that of Chaperonin GroEL from Campylobacter jejuni subsp. jejuni serotype O:2 (strain ATCC 700819 / NCTC 11168).